We begin with the raw amino-acid sequence, 318 residues long: Olfactory receptor 52D1 (318 aa).

The Extracellular segment spans residues 1 to 28 (MSDSNLSDNHLPDTFFLTGIPGLEAAHF). N5 is a glycosylation site (N-linked (GlcNAc...) asparagine). The chain crosses the membrane as a helical span at residues 29 to 49 (WIAIPFCAMYLVALVGNAALI). Over 50–57 (LVIAMDNA) the chain is Cytoplasmic. The helical transmembrane segment at 58 to 78 (LHAPMYLFLCLLSLTDLALSS) threads the bilayer. The Extracellular portion of the chain corresponds to 79-102 (TTVPKMLAILWLHAGEISFGGCLA). An intrachain disulfide couples C100 to C192. A helical transmembrane segment spans residues 103–123 (QMFCVHSIYALESSILLAMAF). Over 124 to 142 (DRYVAICNPLRYTTILNHA) the chain is Cytoplasmic. A helical transmembrane segment spans residues 143 to 163 (VIGRIGFVGLFRSVAIVSPFI). The Extracellular portion of the chain corresponds to 164–199 (FLLRRLPYCGHRVMTHTYCEHMGIARLACANITVNI). The chain crosses the membrane as a helical span at residues 200–220 (VYGLTVALLAMGLDSILIAIS). At 221-240 (YGFILHAVFHLPSHDAQHKA) the chain is on the cytoplasmic side. Residues 241 to 261 (LSTCGSHIGIILVFYIPAFFS) form a helical membrane-spanning segment. Over 262–277 (FLTHRFGHHEVPKHVH) the chain is Extracellular. The chain crosses the membrane as a helical span at residues 278 to 298 (IFLANLYVLVPPVLNPILYGA). Topologically, residues 299 to 318 (RTKEIRSRLLKLLHLGKTSI) are cytoplasmic.

It belongs to the G-protein coupled receptor 1 family.

It localises to the cell membrane. Functionally, odorant receptor. This Homo sapiens (Human) protein is Olfactory receptor 52D1 (OR52D1).